A 77-amino-acid chain; its full sequence is Cold shock protein YdfK (77 aa).

To E.coli YnaE.

This Escherichia coli (strain K12) protein is Cold shock protein YdfK (ydfK).